The sequence spans 116 residues: Large ribosomal subunit protein bL17 (116 aa).

This sequence belongs to the bacterial ribosomal protein bL17 family. In terms of assembly, part of the 50S ribosomal subunit. Contacts protein L32.

The polypeptide is Large ribosomal subunit protein bL17 (Synechocystis sp. (strain ATCC 27184 / PCC 6803 / Kazusa)).